Consider the following 82-residue polypeptide: Endocuticle structural glycoprotein ABD-5 (82 aa).

At Gln-1 the chain carries Pyrrolidone carboxylic acid. A Chitin-binding type R&amp;R domain is found at 18–82; that stretch reads LGQYNFAYRT…ENGYQPRVQS (65 aa).

Functionally, component of the soft endocuticle of migratory locust. The protein is Endocuticle structural glycoprotein ABD-5 of Locusta migratoria (Migratory locust).